A 65-amino-acid chain; its full sequence is U12-theraphotoxin-Cg1a (65 aa).

A signal peptide spans 1–21; the sequence is MKTSVLLFMLGLTFLFDGLAA. A propeptide spanning residues 22-29 is cleaved from the precursor; the sequence is INLQEGER. Cystine bridges form between cysteine 31/cysteine 45, cysteine 38/cysteine 50, and cysteine 44/cysteine 57.

Belongs to the neurotoxin 10 (Hwtx-1) family. 31 (Jztx-15) subfamily. Expressed by the venom gland.

It is found in the secreted. Functionally, probable ion channel inhibitor. This chain is U12-theraphotoxin-Cg1a, found in Chilobrachys guangxiensis (Chinese earth tiger tarantula).